The chain runs to 294 residues: PAK4-inhibitor INKA2 (294 aa).

Disordered regions lie at residues 50–143 (ISGG…STLM), 170–198 (PELE…RELG), and 223–290 (LKEK…DINT). Polar residues predominate over residues 85–99 (SPSNQASLGSTSSGK). Residues 134 to 177 (EPDDWTSTLMSRGRNRQPLVLGDNVFADLVGNWLDLPELEKGGE) form an inka box region. The span at 171–198 (ELEKGGEKGETGEAGEPKGGRGQPRELG) shows a compositional bias: basic and acidic residues. Over residues 241–253 (RSQKVKKRSHSKG) the composition is skewed to basic residues.

It belongs to the INKA family. In terms of assembly, interacts with PAK4.

It is found in the nucleus. Inhibitor of the serine/threonine-protein kinase PAK4. Acts by binding PAK4 in a substrate-like manner, inhibiting the protein kinase activity. This chain is PAK4-inhibitor INKA2, found in Bos taurus (Bovine).